We begin with the raw amino-acid sequence, 101 residues long: NAD(P)H-quinone oxidoreductase subunit 4L, chloroplastic (101 aa).

The next 3 membrane-spanning stretches (helical) occupy residues 2–22, 32–52, and 61–81; these read MLEH…YGLI, MCLE…SDFF, and IFSI…LAIV.

This sequence belongs to the complex I subunit 4L family. NDH is composed of at least 16 different subunits, 5 of which are encoded in the nucleus.

The protein resides in the plastid. It is found in the chloroplast thylakoid membrane. The enzyme catalyses a plastoquinone + NADH + (n+1) H(+)(in) = a plastoquinol + NAD(+) + n H(+)(out). It carries out the reaction a plastoquinone + NADPH + (n+1) H(+)(in) = a plastoquinol + NADP(+) + n H(+)(out). Its function is as follows. NDH shuttles electrons from NAD(P)H:plastoquinone, via FMN and iron-sulfur (Fe-S) centers, to quinones in the photosynthetic chain and possibly in a chloroplast respiratory chain. The immediate electron acceptor for the enzyme in this species is believed to be plastoquinone. Couples the redox reaction to proton translocation, and thus conserves the redox energy in a proton gradient. The sequence is that of NAD(P)H-quinone oxidoreductase subunit 4L, chloroplastic from Panax ginseng (Korean ginseng).